The following is a 729-amino-acid chain: Fatty acid oxidation complex subunit alpha (729 aa).

The tract at residues 1–189 (MLYKGDTLYL…KIGLVDGVVK (189 aa)) is enoyl-CoA hydratase/isomerase. Residue D296 coordinates substrate. The segment at 311 to 729 (ETPKQAAVLG…ARPVGSLKTA (419 aa)) is 3-hydroxyacyl-CoA dehydrogenase. NAD(+) contacts are provided by residues M324, D343, 400-402 (VVE), K407, and S429. H450 (for 3-hydroxyacyl-CoA dehydrogenase activity) is an active-site residue. N453 is an NAD(+) binding site. 2 residues coordinate substrate: N500 and Y660. A disordered region spans residues 708–729 (RHNEPYYPPVEPARPVGSLKTA).

In the N-terminal section; belongs to the enoyl-CoA hydratase/isomerase family. It in the C-terminal section; belongs to the 3-hydroxyacyl-CoA dehydrogenase family. In terms of assembly, heterotetramer of two alpha chains (FadB) and two beta chains (FadA).

The enzyme catalyses a (3S)-3-hydroxyacyl-CoA + NAD(+) = a 3-oxoacyl-CoA + NADH + H(+). The catalysed reaction is a (3S)-3-hydroxyacyl-CoA = a (2E)-enoyl-CoA + H2O. It catalyses the reaction a 4-saturated-(3S)-3-hydroxyacyl-CoA = a (3E)-enoyl-CoA + H2O. It carries out the reaction (3S)-3-hydroxybutanoyl-CoA = (3R)-3-hydroxybutanoyl-CoA. The enzyme catalyses a (3Z)-enoyl-CoA = a 4-saturated (2E)-enoyl-CoA. The catalysed reaction is a (3E)-enoyl-CoA = a 4-saturated (2E)-enoyl-CoA. It participates in lipid metabolism; fatty acid beta-oxidation. In terms of biological role, involved in the aerobic and anaerobic degradation of long-chain fatty acids via beta-oxidation cycle. Catalyzes the formation of 3-oxoacyl-CoA from enoyl-CoA via L-3-hydroxyacyl-CoA. It can also use D-3-hydroxyacyl-CoA and cis-3-enoyl-CoA as substrate. This chain is Fatty acid oxidation complex subunit alpha, found in Salmonella gallinarum (strain 287/91 / NCTC 13346).